The following is a 449-amino-acid chain: CBL-interacting protein kinase 31 (449 aa).

One can recognise a Protein kinase domain in the interval 20–275 (YELGRTIGEG…ISQILEDPWF (256 aa)). ATP-binding positions include 26–34 (IGEGTFAKV) and Lys-49. The Proton acceptor role is filled by Asp-143. The activation loop stretch occupies residues 161–190 (DFGLSALTEQVKADGLLHTTCGTPNYVAPE). Residues 313 to 337 (DQPTSMNAFELISLNQALNLDNLFE) form the NAF domain.

The protein belongs to the protein kinase superfamily. CAMK Ser/Thr protein kinase family. SNF1 subfamily. May interact with CBL3. It depends on Mn(2+) as a cofactor. Post-translationally, autophosphorylated. As to expression, highly expressed in leaf blade and leaf sheath, but not in other tissues.

It catalyses the reaction L-seryl-[protein] + ATP = O-phospho-L-seryl-[protein] + ADP + H(+). It carries out the reaction L-threonyl-[protein] + ATP = O-phospho-L-threonyl-[protein] + ADP + H(+). Involved in cold stress tolerance. CIPK serine-threonine protein kinases interact with CBL proteins. Binding of a CBL protein to the regulatory NAF domain of CIPK protein lead to the activation of the kinase in a calcium-dependent manner. The polypeptide is CBL-interacting protein kinase 31 (CIPK31) (Oryza sativa subsp. japonica (Rice)).